The primary structure comprises 62 residues: Large ribosomal subunit protein bL28 (62 aa).

Residues 1 to 23 are disordered; sequence MARRCFVTGKSAKAGNARSHSMR.

Belongs to the bacterial ribosomal protein bL28 family.

The polypeptide is Large ribosomal subunit protein bL28 (Brevibacillus brevis (strain 47 / JCM 6285 / NBRC 100599)).